Here is a 360-residue protein sequence, read N- to C-terminus: Glycoprotein-N-acetylgalactosamine 3-beta-galactosyltransferase 1 (360 aa).

Over 1–7 the chain is Cytoplasmic; that stretch reads MSIICAK. A helical; Signal-anchor for type II membrane protein membrane pass occupies residues 8–28; sequence VAWLPLTLGTAMGFLITFYLA. The Lumenal portion of the chain corresponds to 29-360; that stretch reads RTLLERNSQP…SDFLEPPMES (332 aa). The cysteines at positions 79 and 103 are disulfide-linked. The UDP site is built by Met82, Glu126, Gly127, Arg128, and Lys134. A glycan (N-linked (GlcNAc...) asparagine) is linked at Asn148. Asp157 is a UDP binding site. Residues Asp157 and Asp159 each coordinate Mn(2+). Asn173 carries an N-linked (GlcNAc...) asparagine glycan. Cysteines 220 and 234 form a disulfide. Position 274 (Trp274) interacts with a glycoprotein. The cysteines at positions 289 and 290 are disulfide-linked. UDP contacts are provided by His298 and Tyr299. His298 contributes to the Mn(2+) binding site. Residues Asn341 and Asn347 are each glycosylated (N-linked (GlcNAc...) asparagine).

It belongs to the glycosyltransferase 31 family. Beta3-Gal-T subfamily. In terms of assembly, homodimer; disulfide-linked. Requires Mn(2+) as cofactor.

It is found in the membrane. It carries out the reaction an N-acetyl-alpha-D-galactosaminyl derivative + UDP-alpha-D-galactose = a beta-D-galactosyl-(1-&gt;3)-N-acetyl-alpha-D-galactosaminyl derivative + UDP + H(+). The protein operates within protein modification; protein glycosylation. Its function is as follows. Glycosyltransferase that generates the core 1 O-glycan Gal-beta1-3GalNAc-alpha1-Ser/Thr (T antigen), which is a precursor for many extended O-glycans in glycoproteins. This is Glycoprotein-N-acetylgalactosamine 3-beta-galactosyltransferase 1 (c1galt1) from Xenopus laevis (African clawed frog).